The following is a 253-amino-acid chain: rRNA adenine N-6-methyltransferase (253 aa).

Residues N14, L16, G40, E61, D85, and N101 each contribute to the S-adenosyl-L-methionine site. Positions 229–253 (CAREESTPRPYLPDCTPTTGSISSR) are disordered. A compositionally biased stretch (polar residues) spans 244–253 (TPTTGSISSR).

Belongs to the class I-like SAM-binding methyltransferase superfamily. rRNA adenine N(6)-methyltransferase family.

Its function is as follows. Involved in erythromycin resistance. The protein is rRNA adenine N-6-methyltransferase (ermA) of Corynebacterium diphtheriae.